A 486-amino-acid chain; its full sequence is Monocarboxylate transporter 12 (486 aa).

Topologically, residues 1–9 (MTKITRVSL) are cytoplasmic. 12 helical membrane passes run 10–30 (ASPP…LVTI), 58–78 (AWIH…GSVV), 86–106 (AGIM…SFAT), 115–135 (LGVL…AMVG), 148–168 (IAMS…QLLI), 177–197 (LLIL…MRPI), 253–273 (FVVL…LFVY), 289–309 (AFLM…FGWL), 320–340 (YVCY…LPML), 353–373 (FGYF…EIVG), 383–403 (VVYF…GWLV), and 410–430 (TAAF…LGFV). The Cytoplasmic segment spans residues 431 to 486 (RIVKRMKRTQVPFPVKDSDPKLQLWTNGSVAYSVARELDQKDEEPLPKARSGCNLT).

It belongs to the major facilitator superfamily. Monocarboxylate porter (TC 2.A.1.13) family. As to quaternary structure, interacts with isoform 2 of BSG; this interaction is required for its localization to the plasma membrane. In terms of tissue distribution, highly expressed in the lung, liver, kidney, and pancreas. Expressed in eye lens.

Its subcellular location is the cell membrane. The protein resides in the basolateral cell membrane. It catalyses the reaction creatine(in) = creatine(out). The enzyme catalyses guanidinoacetate(in) = guanidinoacetate(out). With respect to regulation, creatine uptake is inhibited by carbonyl cyanide 3-chlorophenylhydrazone (CCCP) and by valinomycin. Functionally, functions as a transporter for creatine and as well for its precursor guanidinoacetate. Transport of creatine and GAA is independent of resting membrane potential and extracellular Na(+), Cl(-), or pH. Contributes to the process of creatine biosynthesis and distribution. This chain is Monocarboxylate transporter 12, found in Mus musculus (Mouse).